A 268-amino-acid polypeptide reads, in one-letter code: Glucosamine-6-phosphate deaminase (268 aa).

Residue Asp-67 is the Proton acceptor; for enolization step of the active site. The active-site For ring-opening step is Asn-137. Residue His-139 is the Proton acceptor; for ring-opening step of the active site. Residue Glu-144 is the For ring-opening step of the active site.

This sequence belongs to the glucosamine/galactosamine-6-phosphate isomerase family. NagB subfamily. In terms of assembly, homohexamer.

The enzyme catalyses alpha-D-glucosamine 6-phosphate + H2O = beta-D-fructose 6-phosphate + NH4(+). Its pathway is amino-sugar metabolism; N-acetylneuraminate degradation; D-fructose 6-phosphate from N-acetylneuraminate: step 5/5. Catalyzes the reversible isomerization-deamination of glucosamine 6-phosphate (GlcN6P) to form fructose 6-phosphate (Fru6P) and ammonium ion. This is Glucosamine-6-phosphate deaminase from Pseudoalteromonas translucida (strain TAC 125).